The chain runs to 306 residues: Manganese-binding lipoprotein MntA (306 aa).

The N-terminal stretch at 1 to 18 is a signal peptide; it reads MRQGLMAAVLFATFALTG. The N-palmitoyl cysteine moiety is linked to residue C19. C19 is lipidated: S-diacylglycerol cysteine. Mn(2+) contacts are provided by H66, H132, H198, and D278.

This sequence belongs to the bacterial solute-binding protein 9 family. As to quaternary structure, the complex is probably composed of two ATP-binding proteins (MntB), two transmembrane proteins (MntC and MntD) and a solute-binding protein (MntA). Interacts with FloT.

The protein resides in the cell membrane. Its subcellular location is the membrane raft. Its function is as follows. Probably part of ATP-binding cassette (ABC) transport system MntABCD involved in manganese import. Binds manganese and delivers it to the membrane permease for translocation into the cytoplasm. This chain is Manganese-binding lipoprotein MntA, found in Bacillus subtilis (strain 168).